We begin with the raw amino-acid sequence, 660 residues long: FAST kinase domain-containing protein 3, mitochondrial (660 aa).

The N-terminal 57 residues, 1–57, are a transit peptide targeting the mitochondrion; sequence MALVTLRRNLYHLSDFRIHGALAALKTQQVNHVHKTVKEHLCPWFWSQHPGPIRVRF. The RAP domain maps to 591 to 649; the sequence is VALCIDGPKRFCLNSKHLLGKEATKQRHLRLLGYQVVQIPYYEIEMLKSRLELVDYLQG.

It belongs to the FAST kinase family.

It localises to the mitochondrion. In terms of biological role, required for normal mitochondrial respiration. Increases steady-state levels and half-lives of a subset of mature mitochondrial mRNAs MT-ND2, MT-ND3, MT-CYTB, MT-CO2, and MT-ATP8/6. Promotes MT-CO1 mRNA translation and increases mitochondrial complex IV assembly and activity. In Bos taurus (Bovine), this protein is FAST kinase domain-containing protein 3, mitochondrial (FASTKD3).